A 222-amino-acid chain; its full sequence is C-8 sterol isomerase ERG2 (222 aa).

The helical transmembrane segment at 3-23 threads the bilayer; sequence FFPLLLLIGVVGYIMNVLFTT.

This sequence belongs to the ERG2 family.

The protein resides in the endoplasmic reticulum membrane. It catalyses the reaction fecosterol = episterol. The protein operates within steroid metabolism; ergosterol biosynthesis; ergosterol from zymosterol: step 2/5. With respect to regulation, catalytic activity is inhibited by the morphilines tridemorph, fenpropimorph, and fenpropidin. Functionally, C-8 sterol isomerase; part of the third module of ergosterol biosynthesis pathway that includes the late steps of the pathway. ERG2 catalyzes the reaction which results in unsaturation at C-7 in the B ring of sterols and thus converts fecosterol to episterol. The third module or late pathway involves the ergosterol synthesis itself through consecutive reactions that mainly occur in the endoplasmic reticulum (ER) membrane. Firstly, the squalene synthase ERG9 catalyzes the condensation of 2 farnesyl pyrophosphate moieties to form squalene, which is the precursor of all steroids. Squalene synthase is crucial for balancing the incorporation of farnesyl diphosphate (FPP) into sterol and nonsterol isoprene synthesis. Secondly, the squalene epoxidase ERG1 catalyzes the stereospecific oxidation of squalene to (S)-2,3-epoxysqualene, which is considered to be a rate-limiting enzyme in steroid biosynthesis. Then, the lanosterol synthase ERG7 catalyzes the cyclization of (S)-2,3 oxidosqualene to lanosterol, a reaction that forms the sterol core. In the next steps, lanosterol is transformed to zymosterol through a complex process involving various demethylation, reduction and desaturation reactions. The lanosterol 14-alpha-demethylase ERG11 (also known as CYP51) catalyzes C14-demethylation of lanosterol to produce 4,4'-dimethyl cholesta-8,14,24-triene-3-beta-ol, which is critical for ergosterol biosynthesis. The C-14 reductase ERG24 reduces the C14=C15 double bond of 4,4-dimethyl-cholesta-8,14,24-trienol to produce 4,4-dimethyl-cholesta-8,24-dienol. 4,4-dimethyl-cholesta-8,24-dienol is substrate of the C-4 demethylation complex ERG25-ERG26-ERG27 in which ERG25 catalyzes the three-step monooxygenation required for the demethylation of 4,4-dimethyl and 4alpha-methylsterols, ERG26 catalyzes the oxidative decarboxylation that results in a reduction of the 3-beta-hydroxy group at the C-3 carbon to an oxo group, and ERG27 is responsible for the reduction of the keto group on the C-3. ERG28 has a role as a scaffold to help anchor ERG25, ERG26 and ERG27 to the endoplasmic reticulum and ERG29 regulates the activity of the iron-containing C4-methylsterol oxidase ERG25. Then, the sterol 24-C-methyltransferase ERG6 catalyzes the methyl transfer from S-adenosyl-methionine to the C-24 of zymosterol to form fecosterol. The C-8 sterol isomerase ERG2 catalyzes the reaction which results in unsaturation at C-7 in the B ring of sterols and thus converts fecosterol to episterol. The sterol-C5-desaturase ERG3 then catalyzes the introduction of a C-5 double bond in the B ring to produce 5-dehydroepisterol. The C-22 sterol desaturase ERG5 further converts 5-dehydroepisterol into ergosta-5,7,22,24(28)-tetraen-3beta-ol by forming the C-22(23) double bond in the sterol side chain. Finally, ergosta-5,7,22,24(28)-tetraen-3beta-ol is substrate of the C-24(28) sterol reductase ERG4 to produce ergosterol. This chain is C-8 sterol isomerase ERG2, found in Saccharomyces cerevisiae (strain ATCC 204508 / S288c) (Baker's yeast).